Here is a 420-residue protein sequence, read N- to C-terminus: MKNALLNLSLLTSSVWSPISGGITAPDGFLAAGISAGLKPSGKKDLALLYAPDGACCSGTFTQSVTRAYCVDLCIDRIKASEGKIRAVVINSGHANACTGSRGKIDSEMITHKLAQLLRLSSEEVLICSTGVIGEAIPVEKVNSHLDQLINSLDKEAYLDAANAILTTDLQVKQIAYQAVLGGRRISIGGMAKGSGMIHPSMATMLSYLTCDVGVDHVLWSDMIKRVAESSFNSITVDGDTSTNDTFLAFASGAELDPRYLSILEEGLHLTAQHLAKSIARDGEGANCLLEIKVEGASSDLDARAIARTIASSSLVKTAVHGSDPNWGRIIAALGRAGTSFNLNDVKLWIGPYEIFSNGTPLDFDRQIVSNFMKARLTGKYLIDDLISIRLRIGIGTGSATAWGCDLSDQYVRINADYTT.

Substrate-binding residues include Thr167, Lys193, Thr204, Glu284, Asn415, and Thr420. Thr204 (nucleophile) is an active-site residue.

Belongs to the ArgJ family. In terms of assembly, heterotetramer of two alpha and two beta chains.

It localises to the cytoplasm. The catalysed reaction is N(2)-acetyl-L-ornithine + L-glutamate = N-acetyl-L-glutamate + L-ornithine. The enzyme catalyses L-glutamate + acetyl-CoA = N-acetyl-L-glutamate + CoA + H(+). It functions in the pathway amino-acid biosynthesis; L-arginine biosynthesis; L-ornithine and N-acetyl-L-glutamate from L-glutamate and N(2)-acetyl-L-ornithine (cyclic): step 1/1. The protein operates within amino-acid biosynthesis; L-arginine biosynthesis; N(2)-acetyl-L-ornithine from L-glutamate: step 1/4. Its function is as follows. Catalyzes two activities which are involved in the cyclic version of arginine biosynthesis: the synthesis of N-acetylglutamate from glutamate and acetyl-CoA as the acetyl donor, and of ornithine by transacetylation between N(2)-acetylornithine and glutamate. This chain is Arginine biosynthesis bifunctional protein ArgJ, found in Prochlorococcus marinus (strain NATL2A).